A 475-amino-acid chain; its full sequence is UDP-N-acetylmuramate--L-alanine ligase (475 aa).

114-120 (GTHGKTT) serves as a coordination point for ATP.

It belongs to the MurCDEF family.

Its subcellular location is the cytoplasm. It carries out the reaction UDP-N-acetyl-alpha-D-muramate + L-alanine + ATP = UDP-N-acetyl-alpha-D-muramoyl-L-alanine + ADP + phosphate + H(+). It participates in cell wall biogenesis; peptidoglycan biosynthesis. Cell wall formation. The protein is UDP-N-acetylmuramate--L-alanine ligase of Bartonella henselae (strain ATCC 49882 / DSM 28221 / CCUG 30454 / Houston 1) (Rochalimaea henselae).